The primary structure comprises 413 residues: Imidazolonepropionase (413 aa).

Residues His79 and His81 each contribute to the Fe(3+) site. Residues His79 and His81 each contribute to the Zn(2+) site. Residues Arg88, Tyr151, and His184 each coordinate 4-imidazolone-5-propanoate. Tyr151 is an N-formimidoyl-L-glutamate binding site. His248 provides a ligand contact to Fe(3+). A Zn(2+)-binding site is contributed by His248. Residue Glu251 participates in 4-imidazolone-5-propanoate binding. Position 322 (Asp322) interacts with Fe(3+). Position 322 (Asp322) interacts with Zn(2+). Asn324 and Gly326 together coordinate N-formimidoyl-L-glutamate. 4-imidazolone-5-propanoate is bound at residue Ser327.

Belongs to the metallo-dependent hydrolases superfamily. HutI family. The cofactor is Zn(2+). Fe(3+) is required as a cofactor.

The protein resides in the cytoplasm. The enzyme catalyses 4-imidazolone-5-propanoate + H2O = N-formimidoyl-L-glutamate. It functions in the pathway amino-acid degradation; L-histidine degradation into L-glutamate; N-formimidoyl-L-glutamate from L-histidine: step 3/3. Catalyzes the hydrolytic cleavage of the carbon-nitrogen bond in imidazolone-5-propanoate to yield N-formimidoyl-L-glutamate. It is the third step in the universal histidine degradation pathway. This chain is Imidazolonepropionase, found in Fusobacterium nucleatum subsp. nucleatum (strain ATCC 25586 / DSM 15643 / BCRC 10681 / CIP 101130 / JCM 8532 / KCTC 2640 / LMG 13131 / VPI 4355).